A 208-amino-acid chain; its full sequence is N-(5'-phosphoribosyl)anthranilate isomerase (208 aa).

This sequence belongs to the TrpF family.

The enzyme catalyses N-(5-phospho-beta-D-ribosyl)anthranilate = 1-(2-carboxyphenylamino)-1-deoxy-D-ribulose 5-phosphate. It functions in the pathway amino-acid biosynthesis; L-tryptophan biosynthesis; L-tryptophan from chorismate: step 3/5. In Chlamydia trachomatis serovar A (strain ATCC VR-571B / DSM 19440 / HAR-13), this protein is N-(5'-phosphoribosyl)anthranilate isomerase.